Reading from the N-terminus, the 389-residue chain is Transcription factor MYB97 (389 aa).

HTH myb-type domains follow at residues 16–68 and 69–123; these read GVVL…ANHL and RPNL…KRFQ. 2 consecutive DNA-binding regions (H-T-H motif) follow at residues 44 to 68 and 96 to 119; these read WNSV…ANHL and WARM…NTRL. Residues 131 to 159 form a disordered region; that stretch reads PPEYSQNNHQQQMYPQQPSSPLPSQTPAS. The span at 140–159 shows a compositional bias: low complexity; the sequence is QQQMYPQQPSSPLPSQTPAS.

Accumulates in pollen grains and pollen tube. Mostly expressed in mature pollen grains, and, to a lower extent, in inflorescences and siliques.

It is found in the nucleus. Functionally, transcription activator. Binds to 5'-CAACTGTC-3' and/or 5'-TAACAAA-3' motif in target gene promoter to promote their expression. Together with MYB101 and MYB120, functions as a male factor that controls pollen tube-synergid interaction in fertilization. Required for pollen tube growth arrest and sperm cell release in the female gametophyte, probably via the regulation of pollen tube-specific gene expression. This chain is Transcription factor MYB97, found in Arabidopsis thaliana (Mouse-ear cress).